Consider the following 506-residue polypeptide: Anaerobic nitric oxide reductase transcription regulator NorR (506 aa).

At Asp57 the chain carries 4-aspartylphosphate. The 230-residue stretch at 187–416 folds into the Sigma-54 factor interaction domain; that stretch reads MIGLSPNMMQ…LEHAIHRAVV (230 aa). ATP is bound by residues 215–222 and 278–287; these read GETGTGKE and ADNGTLFLDE. The segment at residues 481–500 is a DNA-binding region (H-T-H motif); that stretch reads WAACARALETDVANLHRLAK.

The protein operates within nitrogen metabolism; nitric oxide reduction. Functionally, required for the expression of anaerobic nitric oxide (NO) reductase, acts as a transcriptional activator for at least the norVW operon. Activation also requires sigma-54. This is Anaerobic nitric oxide reductase transcription regulator NorR from Citrobacter koseri (strain ATCC BAA-895 / CDC 4225-83 / SGSC4696).